The chain runs to 437 residues: Eukaryotic peptide chain release factor subunit 1 (437 aa).

Q182 is modified (N5-methylglutamine). A Glycyl lysine isopeptide (Lys-Gly) (interchain with G-Cter in ubiquitin) cross-link involves residue K331. A Phosphoserine modification is found at S421.

Belongs to the eukaryotic release factor 1 family. As to quaternary structure, component of the eRF1-eRF3-GTP ternary complex, composed of SUP45/eRF1, SUP35/eRF3 and GTP. Interacts with TPA1. Post-translationally, N5-methylated on Gln-182 by MTQ2.

It is found in the cytoplasm. In terms of biological role, component of the eRF1-eRF3-GTP ternary complex, a ternary complex that mediates translation termination in response to the termination codons. The eRF1-eRF3-GTP complex binds to a stop codon in the ribosomal A-site. SUP45/eRF1 is responsible for stop codon recognition and inducing hydrolysis of peptidyl-tRNA. Following GTP hydrolysis by SUP35/eRF3, SUP35/eRF3 dissociates, permitting SUP45/eRF1 to accommodate fully in the A-site and mediate hydrolysis of peptidyl-tRNA. The polypeptide is Eukaryotic peptide chain release factor subunit 1 (SUP45) (Saccharomyces cerevisiae (strain ATCC 204508 / S288c) (Baker's yeast)).